A 192-amino-acid chain; its full sequence is Nucleoside triphosphate pyrophosphatase (192 aa).

The active-site Proton acceptor is aspartate 73.

This sequence belongs to the Maf family. Requires a divalent metal cation as cofactor.

It is found in the cytoplasm. It carries out the reaction a ribonucleoside 5'-triphosphate + H2O = a ribonucleoside 5'-phosphate + diphosphate + H(+). The enzyme catalyses a 2'-deoxyribonucleoside 5'-triphosphate + H2O = a 2'-deoxyribonucleoside 5'-phosphate + diphosphate + H(+). In terms of biological role, nucleoside triphosphate pyrophosphatase. May have a dual role in cell division arrest and in preventing the incorporation of modified nucleotides into cellular nucleic acids. The polypeptide is Nucleoside triphosphate pyrophosphatase (Ehrlichia chaffeensis (strain ATCC CRL-10679 / Arkansas)).